A 282-amino-acid chain; its full sequence is DegV domain-containing protein SpyM3_0586 (282 aa).

The DegV domain occupies 3–280; that stretch reads LAVITDSTAT…EGAIAFGVTP (278 aa). The hexadecanoate site is built by Thr61 and Ser94.

May bind long-chain fatty acids, such as palmitate, and may play a role in lipid transport or fatty acid metabolism. This is DegV domain-containing protein SpyM3_0586 from Streptococcus pyogenes serotype M3 (strain ATCC BAA-595 / MGAS315).